Here is a 416-residue protein sequence, read N- to C-terminus: Putative competence-damage inducible protein (416 aa).

Belongs to the CinA family.

The protein is Putative competence-damage inducible protein of Levilactobacillus brevis (strain ATCC 367 / BCRC 12310 / CIP 105137 / JCM 1170 / LMG 11437 / NCIMB 947 / NCTC 947) (Lactobacillus brevis).